Consider the following 128-residue polypeptide: Small ribosomal subunit protein uS9 (128 aa).

In terms of assembly, part of the 30S ribosomal subunit. Contacts proteins S7 and S10.

Part of the top of the head of the 30S subunit. The C-terminal region penetrates the head emerging in the P-site where it contacts tRNA. The sequence is that of Small ribosomal subunit protein uS9 (rpsI) from Thermus thermophilus (strain ATCC 27634 / DSM 579 / HB8).